A 135-amino-acid chain; its full sequence is ATP synthase epsilon chain (135 aa).

It belongs to the ATPase epsilon chain family. In terms of assembly, F-type ATPases have 2 components, CF(1) - the catalytic core - and CF(0) - the membrane proton channel. CF(1) has five subunits: alpha(3), beta(3), gamma(1), delta(1), epsilon(1). CF(0) has three main subunits: a, b and c.

The protein resides in the cell inner membrane. Produces ATP from ADP in the presence of a proton gradient across the membrane. This chain is ATP synthase epsilon chain, found in Rhizobium johnstonii (strain DSM 114642 / LMG 32736 / 3841) (Rhizobium leguminosarum bv. viciae).